The sequence spans 146 residues: Cytochrome c-type biogenesis protein CcmE (146 aa).

Over 1–8 (MHPKRKKR) the chain is Cytoplasmic. The chain crosses the membrane as a helical; Signal-anchor for type II membrane protein span at residues 9–29 (LLIVLAGLAVVAVASGLILNA). The Periplasmic segment spans residues 30-146 (FRSNLVFFHT…IQRAGETVVQ (117 aa)). The heme site is built by histidine 124 and tyrosine 128.

It belongs to the CcmE/CycJ family.

The protein resides in the cell inner membrane. Functionally, heme chaperone required for the biogenesis of c-type cytochromes. Transiently binds heme delivered by CcmC and transfers the heme to apo-cytochromes in a process facilitated by CcmF and CcmH. This is Cytochrome c-type biogenesis protein CcmE from Laribacter hongkongensis (strain HLHK9).